A 570-amino-acid chain; its full sequence is Urease subunit alpha (570 aa).

The 438-residue stretch at 133–570 (GGIDNHIHYI…LPLAQLYNLF (438 aa)) folds into the Urease domain. Ni(2+)-binding residues include histidine 138, histidine 140, and lysine 221. The residue at position 221 (lysine 221) is an N6-carboxylysine. Histidine 223 lines the substrate pocket. Residues histidine 250 and histidine 276 each contribute to the Ni(2+) site. Residue histidine 324 is the Proton donor of the active site. Position 364 (aspartate 364) interacts with Ni(2+).

It belongs to the metallo-dependent hydrolases superfamily. Urease alpha subunit family. Heterotrimer of UreA (gamma), UreB (beta) and UreC (alpha) subunits. Three heterotrimers associate to form the active enzyme. Ni cation is required as a cofactor. Post-translationally, carboxylation allows a single lysine to coordinate two nickel ions.

It localises to the cytoplasm. The catalysed reaction is urea + 2 H2O + H(+) = hydrogencarbonate + 2 NH4(+). The protein operates within nitrogen metabolism; urea degradation; CO(2) and NH(3) from urea (urease route): step 1/1. The sequence is that of Urease subunit alpha from Cytophaga hutchinsonii (strain ATCC 33406 / DSM 1761 / CIP 103989 / NBRC 15051 / NCIMB 9469 / D465).